The sequence spans 478 residues: Receptor-interacting serine/threonine-protein kinase 3 (478 aa).

Ser2 is subject to Phosphoserine. The 269-residue stretch at 22-290 (LENLGFVGKG…CESKTNNVYI (269 aa)) folds into the Protein kinase domain. ATP-binding positions include 28-36 (VGKGGFGAV) and Lys51. Asp143 acts as the Proton acceptor in catalysis. Residue Ser165 is modified to Phosphoserine. Thr185 bears the Phosphothreonine mark. Residue Ser201 is modified to Phosphoserine; by autocatalysis. Thr228 is modified (phosphothreonine). The residue at position 229 (Ser229) is a Phosphoserine; by autocatalysis. Position 254 is a phosphothreonine (Thr254). Ser301 and Ser323 each carry phosphoserine. The interval 311–330 (RSSDTKLSARESSQKGTEVD) is disordered. The segment covering 313-330 (SDTKLSARESSQKGTEVD) has biased composition (basic and acidic residues). Thr335 is subject to Phosphothreonine. Residues Ser350, Ser369, and Ser380 each carry the phosphoserine modification. The tract at residues 362-429 (ERRGKEASFG…RNSNPWYTWN (68 aa)) is disordered. The span at 376 to 385 (AGTSSDTLAG) shows a compositional bias: polar residues. Thr392 bears the Phosphothreonine mark. Residues 413-429 (QRNQGDGRNSNPWYTWN) show a composition bias toward polar residues. The RIP homotypic interaction motif (RHIM) motif lies at 437–461 (LQSIVLNNCSEVQIGQHNCMSVQPR). Arg474 carries the omega-N-methylarginine modification.

The protein belongs to the protein kinase superfamily. TKL Ser/Thr protein kinase family. In terms of assembly, interacts (via RIP homotypic interaction motif) with RIPK1 (via RIP homotypic interaction motif); this interaction induces RIPK1 phosphorylation and formation of a RIPK1-RIPK3 necrosis-inducing complex. Interacts with MLKL; the interaction is direct and triggers necroptosis. Interacts with ZBP1 (via RIP homotypic interaction motif); interaction with ZBP1 activates RIPK3, triggering necroptosis. Upon TNF-induced necrosis, the RIPK1-RIPK3 dimer further interacts with PGAM5 and MLKL; the formation of this complex leads to PGAM5 phosphorylation and increase in PGAM5 phosphatase activity. Binds TRAF2 and is recruited to the TNFR-1 signaling complex. Interacts with PYGL, GLUL and GLUD1; these interactions result in activation of these metabolic enzymes. Interacts with BIRC2/c-IAP1, BIRC3/c-IAP2 and XIAP/BIRC4. Interacts with ARHGEF2. Interacts with PELI1 (via atypical FHA domain); the phosphorylated form at Thr-185 binds preferentially to PELI1. Interacts with BUB1B, TRAF2 and STUB1. Interacts with CASP6. Component of the AIM2 PANoptosome complex, a multiprotein complex that drives inflammatory cell death (PANoptosis). RIPK1 and RIPK3 undergo reciprocal auto- and trans-phosphorylation. Autophosphorylated following interaction with ZBP1. Phosphorylation of Ser-201 plays a role in the necroptotic function of RIPK3. Autophosphorylates at Thr-228 and Ser-229 following activation by ZBP1: phosphorylation at these sites is a hallmark of necroptosis and is required for binding MLKL. Phosphorylation at Thr-185 is important for its kinase activity, interaction with PELI1 and for its ability to mediate TNF-induced necroptosis. Post-translationally, polyubiquitinated with 'Lys-48' and 'Lys-63'-linked chains by BIRC2/c-IAP1 and BIRC3/c-IAP2, leading to activation of NF-kappa-B. Ubiquitinated by STUB1 leading to its subsequent proteasome-dependent degradation.

Its subcellular location is the cytoplasm. The protein localises to the cytosol. The protein resides in the nucleus. It catalyses the reaction L-seryl-[protein] + ATP = O-phospho-L-seryl-[protein] + ADP + H(+). It carries out the reaction L-threonyl-[protein] + ATP = O-phospho-L-threonyl-[protein] + ADP + H(+). Activity is stimulated by ZBP1, which senses double-stranded Z-RNA structures. RIPK3-dependent necroptosis is inhibited by RIPK1: RIPK1 prevents the ZBP1-induced activation of RIPK3 via FADD-mediated recruitment of CASP8, which cleaves RIPK1 and limits TNF-induced necroptosis. Its function is as follows. Serine/threonine-protein kinase that activates necroptosis and apoptosis, two parallel forms of cell death. Necroptosis, a programmed cell death process in response to death-inducing TNF-alpha family members, is triggered by RIPK3 following activation by ZBP1. Activated RIPK3 forms a necrosis-inducing complex and mediates phosphorylation of MLKL, promoting MLKL localization to the plasma membrane and execution of programmed necrosis characterized by calcium influx and plasma membrane damage. In addition to TNF-induced necroptosis, necroptosis can also take place in the nucleus in response to orthomyxoviruses infection: following ZBP1 activation, which senses double-stranded Z-RNA structures, nuclear RIPK3 catalyzes phosphorylation and activation of MLKL, promoting disruption of the nuclear envelope and leakage of cellular DNA into the cytosol. Also regulates apoptosis: apoptosis depends on RIPK1, FADD and CASP8, and is independent of MLKL and RIPK3 kinase activity. Phosphorylates RIPK1: RIPK1 and RIPK3 undergo reciprocal auto- and trans-phosphorylation. In some cell types, also able to restrict viral replication by promoting cell death-independent responses. In response to flavivirus infection in neurons, promotes a cell death-independent pathway that restricts viral replication: together with ZBP1, promotes a death-independent transcriptional program that modifies the cellular metabolism via up-regulation expression of the enzyme ACOD1/IRG1 and production of the metabolite itaconate. Itaconate inhibits the activity of succinate dehydrogenase, generating a metabolic state in neurons that suppresses replication of viral genomes. RIPK3 binds to and enhances the activity of three metabolic enzymes: GLUL, GLUD1, and PYGL. These metabolic enzymes may eventually stimulate the tricarboxylic acid cycle and oxidative phosphorylation, which could result in enhanced ROS production. In Rattus norvegicus (Rat), this protein is Receptor-interacting serine/threonine-protein kinase 3.